A 140-amino-acid chain; its full sequence is Alpha-lactalbumin (140 aa).

A signal peptide spans 1 to 19; that stretch reads MMSLLSLLLLGIALPATQA. The C-type lysozyme domain maps to 20–140; sequence IDYRKCQASQ…CIEDLDQWRC (121 aa). 4 cysteine pairs are disulfide-bonded: Cys25–Cys140, Cys47–Cys131, Cys80–Cys96, and Cys92–Cys110. Residue Asn63 is glycosylated (N-linked (GlcNAc...) asparagine). 5 residues coordinate Ca(2+): Lys98, Asp101, Asp103, Asp106, and Asp107.

It belongs to the glycosyl hydrolase 22 family. As to quaternary structure, lactose synthase (LS) is a heterodimer of a catalytic component, beta1,4-galactosyltransferase (beta4Gal-T1) and a regulatory component, alpha-lactalbumin (LA). In terms of tissue distribution, mammary gland specific. Secreted in milk.

The protein resides in the secreted. In terms of biological role, regulatory subunit of lactose synthase, changes the substrate specificity of galactosyltransferase in the mammary gland making glucose a good acceptor substrate for this enzyme. This enables LS to synthesize lactose, the major carbohydrate component of milk. In other tissues, galactosyltransferase transfers galactose onto the N-acetylglucosamine of the oligosaccharide chains in glycoproteins. This chain is Alpha-lactalbumin (LALBA), found in Notamacropus eugenii (Tammar wallaby).